The primary structure comprises 623 residues: MFKVLIITLLVNKIHLEKIYNVPVNCGELHPVKAHEIKCPQRLNELSLQAHHNLAKDEHYNKICRPQLKDDAHLEGFICRKQRWITKCSETWYFSTSIEYQILEVIPEYSGCTDAVKKLDQGALIPPYYPPAGCFWNTEMNQEIEFYVLIQHKPFLNPYDNLIYDSRFLTPCTINDSKTKGCPLKDITGTWIPDVRVEEISEHCNNKHWECITVKSFRSELNDKERLWEAPDIGLVHVNKGCLSTFCGKNGIIFEDGEWWSIENQTESDFQNFKIEKCKGKKPGFRMHTDRTEFEELDIKAELEHERCLNTISKILNKENINTLDMSYLAPTRPGRDYAYLFEQTSWQEKLCLSLPDSGRVSKDCNIDWRTSTRGGMVKKNHYGIGSYKRAWCEYRPFVDKNEDGYIDIQELNGHNMSGNHAILETAPAGGSSGNRLNVTLNGMIFVEPTKLYLHTKSLYEGIEDYQKLIKFEVMEYDNVEENLIRYEEDEKFKPVNLNPHEKSQINRTDIVREIQKGGKKVLSAVVGWFTSTAKAVRWTIWAVGAIVTTYAIYKLYKMVKSNSSHSKHREADLEGLQSTTKENMRVEKNDKNYQDLELGLYEEIRSIKGGSKQTGDDRFFDH.

Residues 1–12 form the signal peptide; sequence MFKVLIITLLVN. At 13–539 the chain is on the virion surface side; the sequence is KIHLEKIYNV…FTSTAKAVRW (527 aa). N-linked (GlcNAc...) asparagine; by host glycans are attached at residues N175, N264, N416, N438, and N507. The helical transmembrane segment at 540 to 554 threads the bilayer; the sequence is TIWAVGAIVTTYAIY. Residues 555-623 lie on the Intravirion side of the membrane; it reads KLYKMVKSNS…QTGDDRFFDH (69 aa).

The protein belongs to the rhabdoviruses glycoprotein family. Homotrimer.

The protein resides in the virion membrane. Functionally, attaches the virus to host cellular receptors, inducing endocytosis of the virion. The acidic pH of the endosome induces conformational changes in the glycoprotein trimer which trigger fusion between the virus and the cell membrane. The sequence is that of Glycoprotein (G) from Bovine ephemeral fever virus (strain BB7721) (BEFV).